A 1402-amino-acid polypeptide reads, in one-letter code: Phospholipid-transporting ATPase dnf2 (1402 aa).

4 helical membrane passes run 109–129, 135–155, 457–477, and 501–521; these read FQNV…ISIF, PGLA…KDAI, LNFI…GIAW, and VVTF…SLYI. Catalysis depends on aspartate 569, which acts as the 4-aspartylphosphate intermediate. Residues aspartate 569, lysine 570, threonine 571, glutamate 700, phenylalanine 741, serine 743, lysine 746, lysine 764, arginine 799, threonine 800, threonine 879, glycine 880, aspartate 881, arginine 986, and lysine 992 each coordinate ATP. Position 569 (aspartate 569) interacts with Mg(2+). Mg(2+) is bound at residue threonine 571. Residue aspartate 1012 participates in Mg(2+) binding. ATP is bound by residues asparagine 1015 and aspartate 1016. Mg(2+) is bound at residue aspartate 1016. Transmembrane regions (helical) follow at residues 1066–1086, 1101–1121, 1151–1171, 1193–1213, 1218–1238, and 1260–1280; these read VAEM…TLFW, YTYV…VMGV, IFIG…FFSF, LGVY…ILNQ, VFSI…TGVY, and FWAV…LFMT. Residue lysine 1275 coordinates a 1,2-diacyl-sn-glycero-3-phospho-L-serine.

The protein belongs to the cation transport ATPase (P-type) (TC 3.A.3) family. Type IV subfamily. Requires Mg(2+) as cofactor.

Its subcellular location is the cell membrane. The protein localises to the endoplasmic reticulum membrane. It catalyses the reaction ATP + H2O + phospholipidSide 1 = ADP + phosphate + phospholipidSide 2.. The catalysed reaction is a 1,2-diacyl-sn-glycero-3-phosphoethanolamine(out) + ATP + H2O = a 1,2-diacyl-sn-glycero-3-phosphoethanolamine(in) + ADP + phosphate + H(+). The enzyme catalyses a 1,2-diacyl-sn-glycero-3-phosphocholine(out) + ATP + H2O = a 1,2-diacyl-sn-glycero-3-phosphocholine(in) + ADP + phosphate + H(+). It carries out the reaction a beta-D-glucosyl-(1&lt;-&gt;1')-N-acylsphing-4-enine(out) + ATP + H2O = a beta-D-glucosyl-(1&lt;-&gt;1')-N-acylsphing-4-enine(in) + ADP + phosphate + H(+). It catalyses the reaction a 1,2-diacyl-sn-glycero-3-phospho-L-serine(out) + ATP + H2O = a 1,2-diacyl-sn-glycero-3-phospho-L-serine(in) + ADP + phosphate + H(+). In terms of biological role, catalytic component of a P4-ATPase flippase complex which catalyzes the hydrolysis of ATP coupled to the transport of glucosylceramide, phosphatidylcholine, phosphatidylethanolamine, and small amounts of phosphatidylserine from the lumenal to the cytosolic leaflet of the cell membrane and ensures the maintenance of asymmetric distribution of phospholipids. The sequence is that of Phospholipid-transporting ATPase dnf2 from Schizosaccharomyces pombe (strain 972 / ATCC 24843) (Fission yeast).